A 201-amino-acid chain; its full sequence is Adenylyl-sulfate kinase (201 aa).

35-42 (GLSGSGKS) serves as a coordination point for ATP. S109 acts as the Phosphoserine intermediate in catalysis.

The protein belongs to the APS kinase family.

It catalyses the reaction adenosine 5'-phosphosulfate + ATP = 3'-phosphoadenylyl sulfate + ADP + H(+). It functions in the pathway sulfur metabolism; hydrogen sulfide biosynthesis; sulfite from sulfate: step 2/3. Functionally, catalyzes the synthesis of activated sulfate. In Salmonella arizonae (strain ATCC BAA-731 / CDC346-86 / RSK2980), this protein is Adenylyl-sulfate kinase.